A 78-amino-acid polypeptide reads, in one-letter code: Acyl carrier protein (78 aa).

The 77-residue stretch at 1–77 (MSEVEKKVID…DAIDYIEKNL (77 aa)) folds into the Carrier domain. At Ser-37 the chain carries O-(pantetheine 4'-phosphoryl)serine.

The protein belongs to the acyl carrier protein (ACP) family. 4'-phosphopantetheine is transferred from CoA to a specific serine of apo-ACP by AcpS. This modification is essential for activity because fatty acids are bound in thioester linkage to the sulfhydryl of the prosthetic group.

The protein localises to the cytoplasm. It functions in the pathway lipid metabolism; fatty acid biosynthesis. In terms of biological role, carrier of the growing fatty acid chain in fatty acid biosynthesis. The protein is Acyl carrier protein of Porphyromonas gingivalis (strain ATCC 33277 / DSM 20709 / CIP 103683 / JCM 12257 / NCTC 11834 / 2561).